The following is a 132-amino-acid chain: Lectin OAA (132 aa).

Repeat copies occupy residues 1–66 (ALYN…TLLG) and 67–132 (NNSY…GTTL). The tract at residues 1 to 132 (ALYNVENQWG…GPIGFKGTTL (132 aa)) is 2 X approximate tandem repeats.

As to quaternary structure, monomer.

In terms of biological role, lectin specific for high mannose N-glycans, recognizes the branched moiety of these glycans. Does not recognize other types of N-glycans or monosaccharides. Agglutinates trypsin-treated rabbit erythrocytes. Does not require divalent cations for activity. Inhibits HIV replication in MT4 cells with an EC(50) of 45 nM. Binds to the HIV envelope glycoprotein gp120. The polypeptide is Lectin OAA (Planktothrix agardhii (Oscillatoria agardhii)).